The primary structure comprises 515 residues: U3 small nucleolar RNA-associated protein 15 homolog (515 aa).

WD repeat units follow at residues 36-75 (KEFG…PIKT), 78-117 (RFKD…ALRQ), 120-159 (GHSK…EITS), 162-202 (EHTD…SVMS), 204-242 (DHGQ…QLLV), 246-285 (NHHK…VVHS), and 287-326 (DYAA…RKQL).

As to quaternary structure, part of the small subunit (SSU) processome, composed of more than 70 proteins and the RNA chaperone small nucleolar RNA (snoRNA) U3. May be a component of the proposed t-UTP subcomplex of the ribosomal small subunit (SSU) processome.

The protein resides in the nucleus. It is found in the nucleolus. In terms of biological role, ribosome biogenesis factor. Involved in nucleolar processing of pre-18S ribosomal RNA. Required for optimal pre-ribosomal RNA transcription by RNA polymerase I. Part of the small subunit (SSU) processome, first precursor of the small eukaryotic ribosomal subunit. During the assembly of the SSU processome in the nucleolus, many ribosome biogenesis factors, an RNA chaperone and ribosomal proteins associate with the nascent pre-rRNA and work in concert to generate RNA folding, modifications, rearrangements and cleavage as well as targeted degradation of pre-ribosomal RNA by the RNA exosome. The polypeptide is U3 small nucleolar RNA-associated protein 15 homolog (utp15) (Xenopus tropicalis (Western clawed frog)).